The sequence spans 621 residues: Cryptochrome-1 (621 aa).

In terms of domain architecture, Photolyase/cryptochrome alpha/beta spans 3 to 132 (VNAVHWFRKG…EVIVRISHTL (130 aa)). 3 consecutive short sequence motifs (LIR) follow at residues 50–54 (NRWRF), 82–87 (DVFPRL), and 151–156 (KRFQTL). Ser-252 serves as a coordination point for FAD. 4 short sequence motifs (LIR) span residues 255-260 (LRFGCL), 271-276 (DLYKKV), 285-290 (SLYGQL), and 335-339 (TGFPW). Gln-289 serves as a coordination point for FAD. His-355 lines the FAD pocket. The short motif at 379-384 (KVFEEL) is the LIR 8 element. 387–389 (DAD) contributes to the FAD binding site. Short sequence motifs (LIR) lie at residues 395–400 (GSWMWL), 411–416 (HCYCPV), 430–435 (RRYLPV), 486–491 (QIYQQL), and 492–497 (SRYRGL). The segment at 581-621 (QSHLMQPGRASLGTGISAGKRPNPEEETQSVGPKVQRQSTN) is disordered.

Belongs to the DNA photolyase class-1 family. In terms of assembly, component of the circadian core oscillator, which includes the CRY proteins, CLOCK or NPAS2, BMAL1 or BMAL2, CSNK1E, and the PER proteins. Requires FAD as cofactor. (6R)-5,10-methylene-5,6,7,8-tetrahydrofolate is required as a cofactor. In terms of tissue distribution, expressed in the pineal gland.

It localises to the cytoplasm. The protein resides in the nucleus. Functionally, transcriptional repressor which forms a core component of the circadian clock. The circadian clock, an internal time-keeping system, regulates various physiological processes through the generation of approximately 24 hour circadian rhythms in gene expression, which are translated into rhythms in metabolism and behavior. It is derived from the Latin roots 'circa' (about) and 'diem' (day) and acts as an important regulator of a wide array of physiological functions including metabolism, sleep, body temperature, blood pressure, endocrine, immune, cardiovascular, and renal function. Consists of two major components: the central clock, residing in the suprachiasmatic nucleus (SCN) of the brain, and the peripheral clocks that are present in nearly every tissue and organ system. Both the central and peripheral clocks can be reset by environmental cues, also known as Zeitgebers (German for 'timegivers'). The predominant Zeitgeber for the central clock is light, which is sensed by retina and signals directly to the SCN. The central clock entrains the peripheral clocks through neuronal and hormonal signals, body temperature and feeding-related cues, aligning all clocks with the external light/dark cycle. Circadian rhythms allow an organism to achieve temporal homeostasis with its environment at the molecular level by regulating gene expression to create a peak of protein expression once every 24 hours to control when a particular physiological process is most active with respect to the solar day. Transcription and translation of core clock components (CLOCK, NPAS2, BMAL1, BMAL2, PER1, PER2, PER3, CRY1 and CRY2) plays a critical role in rhythm generation, whereas delays imposed by post-translational modifications (PTMs) are important for determining the period (tau) of the rhythms (tau refers to the period of a rhythm and is the length, in time, of one complete cycle). A diurnal rhythm is synchronized with the day/night cycle, while the ultradian and infradian rhythms have a period shorter and longer than 24 hours, respectively. Disruptions in the circadian rhythms contribute to the pathology of cardiovascular diseases, cancer, metabolic syndromes and aging. A transcription/translation feedback loop (TTFL) forms the core of the molecular circadian clock mechanism. Transcription factors, CLOCK or NPAS2 and BMAL1 or BMAL2, form the positive limb of the feedback loop, act in the form of a heterodimer and activate the transcription of core clock genes and clock-controlled genes (involved in key metabolic processes), harboring E-box elements (5'-CACGTG-3') within their promoters. The core clock genes: PER1/2/3 and CRY1/2 which are transcriptional repressors form the negative limb of the feedback loop and interact with the CLOCK|NPAS2-BMAL1|BMAL2 heterodimer inhibiting its activity and thereby negatively regulating their own expression. This heterodimer also activates nuclear receptors NR1D1/2 and RORA/B/G, which form a second feedback loop and which activate and repress BMAL1 transcription, respectively. CRY1 and CRY2 have redundant functions but also differential and selective contributions at least in defining the pace of the SCN circadian clock and its circadian transcriptional outputs. More potent transcriptional repressor in cerebellum and liver than CRY2, though more effective in lengthening the period of the SCN oscillator. On its side, CRY2 seems to play a critical role in tuning SCN circadian period by opposing the action of CRY1. With CRY2, is dispensable for circadian rhythm generation but necessary for the development of intercellular networks for rhythm synchrony. Capable of translocating circadian clock core proteins such as PER proteins to the nucleus. Interacts with CLOCK-BMAL1 independently of PER proteins and is found at CLOCK-BMAL1-bound sites, suggesting that CRY may act as a molecular gatekeeper to maintain CLOCK-BMAL1 in a poised and repressed state until the proper time for transcriptional activation. Represses CLOCK-BMAL1-mediated transcriptional activation. The protein is Cryptochrome-1 (CRY1) of Gallus gallus (Chicken).